We begin with the raw amino-acid sequence, 315 residues long: Olfactory receptor 5P59 (315 aa).

Residues 1–28 (MAFLQDGNHTAVTEFILLGLTDDPVLRV) are Extracellular-facing. N-linked (GlcNAc...) asparagine glycosylation occurs at asparagine 8. Residues 29 to 49 (VLFTIILCIYLVTVFGNLSTI) form a helical membrane-spanning segment. The Cytoplasmic portion of the chain corresponds to 50 to 57 (LLIRVSSQ). The helical transmembrane segment at 58–78 (LHHPMYFFLSHLASVDIGISS) threads the bilayer. Residues 79–102 (SVTPSMLVNFLLERSTISYLGCGI) lie on the Extracellular side of the membrane. The cysteines at positions 100 and 193 are disulfide-linked. Residues 103–123 (QLGSADFIASVECFLLAAMAY) form a helical membrane-spanning segment. Residues 124–136 (DRFMAVCNPLLYS) lie on the Cytoplasmic side of the membrane. The helical transmembrane segment at 137-157 (TKMSTQVCVQLVVGSYIGGFL) threads the bilayer. At 158–200 (NASLIVTVYFFSFLFCGPNRIDHFFCDFAPLAELSCSDVSVSV) the chain is on the extracellular side. Residues 201 to 221 (LIISFSAGSVTMITVFVIVIS) form a helical membrane-spanning segment. Over 222–241 (YSYILITILKMHSTEGRHKA) the chain is Cytoplasmic. Residues 242–262 (FSTCTSHLTAVTLYYGTITFI) form a helical membrane-spanning segment. The Extracellular portion of the chain corresponds to 263-275 (YVMPKSSFSTDQN). A helical transmembrane segment spans residues 276–296 (KVVSVFYMVMIPMLNPLIYSL). At 297–315 (SNNEIKGALKRQLGMKTLS) the chain is on the cytoplasmic side.

It belongs to the G-protein coupled receptor 1 family.

Its subcellular location is the cell membrane. Its function is as follows. Potential odorant receptor. This is Olfactory receptor 5P59 from Mus musculus (Mouse).